Reading from the N-terminus, the 406-residue chain is Phosphopentomutase (406 aa).

Mn(2+) is bound by residues aspartate 10, aspartate 305, histidine 310, aspartate 346, histidine 347, and histidine 358.

Belongs to the phosphopentomutase family. The cofactor is Mn(2+).

The protein resides in the cytoplasm. The enzyme catalyses 2-deoxy-alpha-D-ribose 1-phosphate = 2-deoxy-D-ribose 5-phosphate. It carries out the reaction alpha-D-ribose 1-phosphate = D-ribose 5-phosphate. Its pathway is carbohydrate degradation; 2-deoxy-D-ribose 1-phosphate degradation; D-glyceraldehyde 3-phosphate and acetaldehyde from 2-deoxy-alpha-D-ribose 1-phosphate: step 1/2. Its function is as follows. Isomerase that catalyzes the conversion of deoxy-ribose 1-phosphate (dRib-1-P) and ribose 1-phosphate (Rib-1-P) to deoxy-ribose 5-phosphate (dRib-5-P) and ribose 5-phosphate (Rib-5-P), respectively. This chain is Phosphopentomutase, found in Agrobacterium fabrum (strain C58 / ATCC 33970) (Agrobacterium tumefaciens (strain C58)).